Consider the following 370-residue polypeptide: Ubiquitin carboxyl-terminal hydrolase 12 (370 aa).

Residues 1–4 (MEIL) carry the Required for plasma membrane localization of USP12/WDR20 motif. The USP domain maps to 39–369 (FGLVNFGNTC…SGYILFYQSR (331 aa)). The active-site Nucleophile is the Cys48. Over residues 146 to 157 (QEKQNGRLRNGD) the composition is skewed to basic and acidic residues. Residues 146–168 (QEKQNGRLRNGDVDNEDNNSTPD) are disordered. Residues Cys186, Cys189, Cys233, and Cys236 each coordinate Zn(2+). Residue His317 is the Proton acceptor of the active site.

This sequence belongs to the peptidase C19 family. USP12/USP46 subfamily. Interacts with WDR48. Interacts with WDR20; this interaction promotes translocation of the USP12 complex to the plasma membrane. Component of the USP12/WDR20/WDR48 deubiquitinating complex. Component of the USP12/DMWD/WDR48 deubiquitinating complex. Interacts with PHLPP1. Interacts with RBPJ. Interacts with CBP; this interaction blocks the acetyltransferase activity of CREBBP.

It is found in the nucleus. It localises to the cytoplasm. The protein resides in the cell membrane. The catalysed reaction is Thiol-dependent hydrolysis of ester, thioester, amide, peptide and isopeptide bonds formed by the C-terminal Gly of ubiquitin (a 76-residue protein attached to proteins as an intracellular targeting signal).. Its activity is regulated as follows. Activated by interaction with WDR20; WDR48 and DMWD through different allosteric mechanisms. In terms of biological role, deubiquitinating enzyme that plays various roles in the regulation of the immune response and inflammation. During TCR engagement and activation, translocates into the cytoplasm and deubiquitinates its substrates LAT and TRAT1 and prevents their lysosome-dependent degradation to stabilize the TCR signaling complex at the plasma membrane. Plays an essential role in the selective LPS-induced macrophage response through the activation of NF-kappa-B pathway. In addition, promotes that antiviral immune response through targeting DNA sensor IFI16 to inhibit its proteasome-dependent degradation. Participates in the interferon signaling pathway and antiviral response independently of its deubiquitinase activity by maintaining nuclear phosphorylated STAT1 levels via inhibition of its CREBBP-mediated acetylation and subsequent dephosphorylation. Plays an intrinsic role in promoting the differentiation, activation and proliferation of CD4(+) T-cell by activating the NF-kappa-B signaling pathway through deubiquitinating and stabilizing B-cell lymphoma/leukemia 10/BCL10. In myeloid-derived suppressor cells promotes the activation of the NF-kappa-B via deubiquitination and stabilization of RELA. Regulates the 'Lys-63'-linked polyubiquitin chains of BAX and thereby modulates the mitochondrial apoptotic process. Negative regulator of NOTCH signaling that specifically deubiquitinates non-activated NOTCH receptors to target them for lysosomal degradation; deubiquitination of NOTCH stimulates its transport form late endosomes to lysosomes. Protects neurons against HTT/huntingtin-induced polyglutamine expansion-dependent neurodegeneration through regulation of autophagic flux. This function is independent of deubiquitinase activity or of other components of the USP12-WDR20-WDR48 deubiquitinating complex. In complex with WDR48, acts as a potential tumor suppressor by positively regulating PHLPP1 stability. This is Ubiquitin carboxyl-terminal hydrolase 12 (Usp12) from Mus musculus (Mouse).